The following is a 616-amino-acid chain: Probable methyltransferase PMT2 (616 aa).

Over 1-13 (MALKSSSADGKTR) the chain is Cytoplasmic. A helical; Signal-anchor for type II membrane protein transmembrane segment spans residues 14-34 (SSVQIFIVFSLCCFFYILGAW). Over 35–616 (QRSGFGKGDS…YWVTNSTSTH (582 aa)) the chain is Lumenal. Asn205 and Asn611 each carry an N-linked (GlcNAc...) asparagine glycan.

This sequence belongs to the methyltransferase superfamily.

It localises to the golgi apparatus membrane. This chain is Probable methyltransferase PMT2, found in Arabidopsis thaliana (Mouse-ear cress).